We begin with the raw amino-acid sequence, 536 residues long: CTP synthase (536 aa).

The amidoligase domain stretch occupies residues 1–267; that stretch reads MSKFVFVTGG…CKQTLNCLEL (267 aa). Ser13 lines the CTP pocket. Position 13 (Ser13) interacts with UTP. ATP contacts are provided by residues 14–19 and Asp71; that span reads SIGKGI. Positions 71 and 141 each coordinate Mg(2+). CTP is bound by residues 148-150, 188-193, and Lys224; these read DIE and KTKPTQ. UTP-binding positions include 188–193 and Lys224; that span reads KTKPTQ. One can recognise a Glutamine amidotransferase type-1 domain in the interval 292 to 534; sequence KVALVGKYIE…IKASQEKLEQ (243 aa). Residue Gly354 coordinates L-glutamine. The active-site Nucleophile; for glutamine hydrolysis is the Cys381. L-glutamine-binding positions include 382-385, Glu405, and Arg462; that span reads LGMQ. Active-site residues include His507 and Glu509.

Belongs to the CTP synthase family. Homotetramer.

The enzyme catalyses UTP + L-glutamine + ATP + H2O = CTP + L-glutamate + ADP + phosphate + 2 H(+). It carries out the reaction L-glutamine + H2O = L-glutamate + NH4(+). The catalysed reaction is UTP + NH4(+) + ATP = CTP + ADP + phosphate + 2 H(+). The protein operates within pyrimidine metabolism; CTP biosynthesis via de novo pathway; CTP from UDP: step 2/2. Allosterically activated by GTP, when glutamine is the substrate; GTP has no effect on the reaction when ammonia is the substrate. The allosteric effector GTP functions by stabilizing the protein conformation that binds the tetrahedral intermediate(s) formed during glutamine hydrolysis. Inhibited by the product CTP, via allosteric rather than competitive inhibition. Catalyzes the ATP-dependent amination of UTP to CTP with either L-glutamine or ammonia as the source of nitrogen. Regulates intracellular CTP levels through interactions with the four ribonucleotide triphosphates. This chain is CTP synthase, found in Prochlorococcus marinus subsp. pastoris (strain CCMP1986 / NIES-2087 / MED4).